The primary structure comprises 228 residues: GDT1-like protein 5 (228 aa).

Gly-2 is subject to N-acetylglycine. A run of 6 helical transmembrane segments spans residues 12-32 (LAMTFLSEIGDKTFFAAAILA), 39-59 (LVLAGCLSALIVMTILSATLG), 71-91 (THHITTFLFFGFGLWSLWDGF), 133-153 (PFLTAFFSPIFLKAFSINFFG), 173-193 (LGVVLGGIVAQTLCTTAAVLG), and 205-225 (IVALSGGMLFIIFGIQSLLTP).

This sequence belongs to the GDT1 family.

The protein localises to the membrane. The chain is GDT1-like protein 5 from Arabidopsis thaliana (Mouse-ear cress).